The following is a 436-amino-acid chain: UDP-N-acetylglucosamine 1-carboxyvinyltransferase (436 aa).

Phosphoenolpyruvate is bound at residue 22 to 23; it reads KN. A UDP-N-acetyl-alpha-D-glucosamine-binding site is contributed by Arg96. Catalysis depends on Cys120, which acts as the Proton donor. 2-(S-cysteinyl)pyruvic acid O-phosphothioketal is present on Cys120. UDP-N-acetyl-alpha-D-glucosamine is bound by residues 125–129, Asp309, and Ile331; that span reads RPIDL.

It belongs to the EPSP synthase family. MurA subfamily.

It localises to the cytoplasm. The enzyme catalyses phosphoenolpyruvate + UDP-N-acetyl-alpha-D-glucosamine = UDP-N-acetyl-3-O-(1-carboxyvinyl)-alpha-D-glucosamine + phosphate. Its pathway is cell wall biogenesis; peptidoglycan biosynthesis. Its function is as follows. Cell wall formation. Adds enolpyruvyl to UDP-N-acetylglucosamine. The polypeptide is UDP-N-acetylglucosamine 1-carboxyvinyltransferase (Acidobacterium capsulatum (strain ATCC 51196 / DSM 11244 / BCRC 80197 / JCM 7670 / NBRC 15755 / NCIMB 13165 / 161)).